Consider the following 400-residue polypeptide: Acetate kinase (400 aa).

Asn-10 lines the Mg(2+) pocket. Lys-17 lines the ATP pocket. Residue Arg-91 participates in substrate binding. Asp-150 acts as the Proton donor/acceptor in catalysis. ATP-binding positions include 210-214 (HLGNG), 285-287 (DCR), and 333-337 (GIGEN). Mg(2+) is bound at residue Glu-387.

It belongs to the acetokinase family. As to quaternary structure, homodimer. Mg(2+) serves as cofactor. It depends on Mn(2+) as a cofactor.

The protein localises to the cytoplasm. It catalyses the reaction acetate + ATP = acetyl phosphate + ADP. It functions in the pathway metabolic intermediate biosynthesis; acetyl-CoA biosynthesis; acetyl-CoA from acetate: step 1/2. Functionally, catalyzes the formation of acetyl phosphate from acetate and ATP. Can also catalyze the reverse reaction. In Pectobacterium atrosepticum (strain SCRI 1043 / ATCC BAA-672) (Erwinia carotovora subsp. atroseptica), this protein is Acetate kinase.